The following is a 699-amino-acid chain: Polyribonucleotide nucleotidyltransferase (699 aa).

Mg(2+) contacts are provided by Asp488 and Asp494. In terms of domain architecture, KH spans 555-614 (PRIYSIKVNPDKIKDVIGKGGSVIRSLTEETNTIIDIEDNGIIKIVALDYDKAKQAIRRI). The region spanning 624-692 (GAVYTGKVSH…RQGRIRLSMK (69 aa)) is the S1 motif domain.

This sequence belongs to the polyribonucleotide nucleotidyltransferase family. In terms of assembly, component of the RNA degradosome, which is a multiprotein complex involved in RNA processing and mRNA degradation. Requires Mg(2+) as cofactor.

Its subcellular location is the cytoplasm. It carries out the reaction RNA(n+1) + phosphate = RNA(n) + a ribonucleoside 5'-diphosphate. In terms of biological role, involved in mRNA degradation. Catalyzes the phosphorolysis of single-stranded polyribonucleotides processively in the 3'- to 5'-direction. This chain is Polyribonucleotide nucleotidyltransferase, found in Blochmanniella pennsylvanica (strain BPEN).